A 238-amino-acid polypeptide reads, in one-letter code: Ribonuclease PH (238 aa).

Phosphate is bound by residues R86 and 124-126; that span reads GTR.

Belongs to the RNase PH family. Homohexameric ring arranged as a trimer of dimers.

The catalysed reaction is tRNA(n+1) + phosphate = tRNA(n) + a ribonucleoside 5'-diphosphate. Its function is as follows. Phosphorolytic 3'-5' exoribonuclease that plays an important role in tRNA 3'-end maturation. Removes nucleotide residues following the 3'-CCA terminus of tRNAs; can also add nucleotides to the ends of RNA molecules by using nucleoside diphosphates as substrates, but this may not be physiologically important. Probably plays a role in initiation of 16S rRNA degradation (leading to ribosome degradation) during starvation. The polypeptide is Ribonuclease PH (Salmonella gallinarum (strain 287/91 / NCTC 13346)).